Consider the following 166-residue polypeptide: Large ribosomal subunit protein uL10 (166 aa).

It belongs to the universal ribosomal protein uL10 family. Part of the ribosomal stalk of the 50S ribosomal subunit. The N-terminus interacts with L11 and the large rRNA to form the base of the stalk. The C-terminus forms an elongated spine to which L12 dimers bind in a sequential fashion forming a multimeric L10(L12)X complex.

In terms of biological role, forms part of the ribosomal stalk, playing a central role in the interaction of the ribosome with GTP-bound translation factors. The sequence is that of Large ribosomal subunit protein uL10 from Pseudomonas fluorescens (strain Pf0-1).